Here is a 1688-residue protein sequence, read N- to C-terminus: Voltage-dependent L-type calcium channel subunit alpha-1S (1688 aa).

Residues 1-24 (MDAMGSAAEEGTQKKKRRPLVPPP) form a disordered region. Over 1 to 51 (MDAMGSAAEEGTQKKKRRPLVPPPPRPPRALFCLGLQNPFRKFCINIVEWK) the chain is Cytoplasmic. One copy of the I repeat lies at 38–335 (NPFRKFCINI…LVLGVLSGEF (298 aa)). A helical membrane pass occupies residues 52–70 (PFEMIILLTIFANCVALAI). Topologically, residues 71-88 (FLPMPEDDTNSTNSVLEK) are extracellular. Asparagine 80 is a glycosylation site (N-linked (GlcNAc...) asparagine). Residues 89 to 108 (VEYIFLFIFTIESFLKIVAY) form a helical membrane-spanning segment. Over 109–120 (GFILHTDAYLRN) the chain is Cytoplasmic. Residues 121–139 (GWNILDFTIVSVGVFSVLL) traverse the membrane as a helical segment. Topologically, residues 140–158 (EQISKLQGLPAPGKSSGFN) are extracellular. The chain crosses the membrane as a helical span at residues 159–177 (VKALRAFRVLRPLRLVSGV). The Cytoplasmic segment spans residues 178–196 (PSLQVVLNSIIKAMIPLLH). Residues 197–216 (IALLVLFMIIIYAIVGLELF) traverse the membrane as a helical segment. Over 217 to 307 (SGKMHKTCYF…WVNDAIGNEW (91 aa)) the chain is Extracellular. Asparagine 255 carries an N-linked (GlcNAc...) asparagine glycan. Residue glutamate 290 coordinates Ca(2+). Residues 308 to 332 (PWIYFVSLILLGSFFVLNLVLGVLS) traverse the membrane as a helical segment. Topologically, residues 333 to 431 (GEFTKEREKA…RKSRDLVKSR (99 aa)) are cytoplasmic. Residues 355 to 372 (QAMDEDLRGYLDWITHAE) form a binding to the beta subunit region. Residues 417–663 (HRLLRRKSRD…VFLAIAVDNL (247 aa)) form an II repeat. A helical membrane pass occupies residues 432–450 (FFYWLVIIIILLNTVIIAT). The Extracellular portion of the chain corresponds to 451-465 (EHHHQPDSLTKAQDI). Residues 466–485 (ANEVLLALFTMEMIVKIYAL) traverse the membrane as a helical segment. The Cytoplasmic portion of the chain corresponds to 486-493 (GFQSYFMS). Residues 494 to 512 (LFNRFDSFVVCTGLLEVML) traverse the membrane as a helical segment. The Extracellular segment spans residues 513–522 (VASDIMSPLG). The helical transmembrane segment at 523 to 541 (ISVLRCIRLLRIFKITRYW) threads the bilayer. The Cytoplasmic segment spans residues 542-560 (TSLNNLVASLLNSVRSIAS). Residues 561–580 (LLLLLFLFMIIFALLGMQMF) traverse the membrane as a helical segment. Over 581–635 (GGKFDFEDLEVRRSTFDTFPQALITVFQILTGEDWTAVMYNGIMAYGGPTYSGMS) the chain is Extracellular. Glutamate 613 lines the Ca(2+) pocket. The helical transmembrane segment at 636–660 (VCIYFIILFVCGNYILLNVFLAIAV) threads the bilayer. At 661 to 797 (DNLAEAENLT…VLCHRIINAT (137 aa)) the chain is on the cytoplasmic side. 2 disordered regions span residues 672-696 (AQKA…TEEE) and 729-755 (EIKD…ISPR). Residues 740-749 (PGDDEEEEPE) show a composition bias toward acidic residues. One copy of the III repeat lies at 784–1066 (NKIRVLCHRI…IFVGFVIVTF (283 aa)). A helical membrane pass occupies residues 798–816 (TFTNFILLFILLSSISLAA). The Extracellular segment spans residues 817-832 (EDPIQPESFRNKVLSK). A helical membrane pass occupies residues 833–852 (LDIVFTVIFTTEIVLKMTAY). Residues 853–864 (GAFLHKGSFCRN) are Cytoplasmic-facing. The helical transmembrane segment at 865 to 883 (SFNILDLSVVGVSLISMGI) threads the bilayer. Over 884–890 (ESSAISV) the chain is Extracellular. The chain crosses the membrane as a helical span at residues 891-909 (VKILRVLRVLRPLRAINRA). At 910 to 928 (KGLKHVVQCLFVAIKTIGN) the chain is on the cytoplasmic side. A helical transmembrane segment spans residues 929 to 948 (IVLVTTLLQFMFSCIGVQLF). Residues 949-1038 (KGKFYSCTDT…MGPIYNYRIE (90 aa)) are Extracellular-facing. The interval 986–1075 (RVWSHSDFHF…FQEQGEQEYK (90 aa)) is dihydropyridine binding. Residue glutamate 1012 participates in Ca(2+) binding. The helical transmembrane segment at 1039–1063 (IAVFFIVYIILIAFFMMNIFVGFVI) threads the bilayer. The Cytoplasmic segment spans residues 1064-1116 (VTFQEQGEQEYKDCELDKNQRQCVQYALKARPLRRYIPKNPHQYKIWYVVTSS). The IV repeat unit spans residues 1103 to 1371 (NPHQYKIWYV…LFVAVIMDNF (269 aa)). Residues 1117–1135 (YFEYLMFFLITLNTISLGM) traverse the membrane as a helical segment. Topologically, residues 1136–1150 (QHYGQTAEFSYMSDI) are extracellular. A helical transmembrane segment spans residues 1151–1170 (LNVAFTGIFTVEMFLKLAAF). Topologically, residues 1171–1178 (KAKGYFGD) are cytoplasmic. A helical membrane pass occupies residues 1179–1197 (PWNVFDFLIVIGSVIDVIL). The Extracellular portion of the chain corresponds to 1198-1218 (SEIDTPGIPATPGAEESSRIS). Residues 1219–1237 (ITFFRLFRVLRLVKLLSRG) traverse the membrane as a helical segment. Residues 1238-1256 (EGVRTLLWTFIKSFQALPY) are Cytoplasmic-facing. A helical membrane pass occupies residues 1257-1276 (VALLIVMLFFIYAVIGMQVF). Residues 1277-1343 (GKIALVDGTH…GEEYTCGTSF (67 aa)) lie on the Extracellular side of the membrane. The tract at residues 1324–1390 (LCDPMSDFQP…LGPHHLDEFK (67 aa)) is dihydropyridine binding. The segment at 1336-1379 (EYTCGTSFAYFYFISFYMLCAFLIINLFVAVIMDNFDYLTRDWS) is phenylalkylamine binding. Residues 1344–1368 (AYFYFISFYMLCAFLIINLFVAVIM) form a helical membrane-spanning segment. At 1369–1688 (DNFDYLTRDW…TNSSISQATN (320 aa)) the chain is on the cytoplasmic side. Disordered regions lie at residues 1635 to 1664 (PEPV…RLTT) and 1669 to 1688 (RVQQ…QATN). A compositionally biased stretch (polar residues) spans 1678–1688 (DTNSSISQATN).

The protein belongs to the calcium channel alpha-1 subunit (TC 1.A.1.11) family. Multisubunit complex consisting of alpha-1, alpha-2, beta and delta subunits in a 1:1:1:1 ratio. The channel activity is directed by the pore-forming and voltage-sensitive alpha-1 subunit. In many cases, this subunit is sufficient to generate voltage-sensitive calcium channel activity. The auxiliary subunits beta and alpha-2/delta linked by a disulfide bridge regulate the channel activity. An additional gamma subunit is present only in skeletal muscle L-type channel. Phosphorylation by PKA stimulates the calcium channel function. Skeletal muscle specific.

Its subcellular location is the membrane. In terms of biological role, voltage-sensitive calcium channels (VSCC) mediate the entry of calcium ions into excitable cells and are also involved in a variety of calcium-dependent processes, including muscle contraction, gene expression, cell motility, cell division and cell death. The isoform alpha-1S gives rise to L-type calcium currents. Long-lasting (L-type) calcium channels belong to the 'high-voltage activated' (HVA) group. They are blocked by dihydropyridines (DHP), phenylalkylamines, and by benzothiazepines. Calcium channels containing the alpha-1S subunit play an important role in excitation-contraction coupling in skele|tal muscle. This chain is Voltage-dependent L-type calcium channel subunit alpha-1S, found in Aquarana catesbeiana (American bullfrog).